Consider the following 399-residue polypeptide: 3-methyl-2-oxobutanoate hydroxymethyltransferase 2, mitochondrial (399 aa).

The N-terminal 90 residues, 1–90 (MSFSRLLTPR…ARRVTLATLR (90 aa)), are a transit peptide targeting the mitochondrion. Residues Asp125 and Asp164 each coordinate Mg(2+). 3-methyl-2-oxobutanoate-binding positions include 125–126 (DS), Asp164, and Lys194. Glu196 is a binding site for Mg(2+). Glu264 acts as the Proton acceptor in catalysis.

Belongs to the PanB family. Mg(2+) is required as a cofactor.

It is found in the mitochondrion. The enzyme catalyses 3-methyl-2-oxobutanoate + (6R)-5,10-methylene-5,6,7,8-tetrahydrofolate + H2O = 2-dehydropantoate + (6S)-5,6,7,8-tetrahydrofolate. It participates in cofactor biosynthesis; (R)-pantothenate biosynthesis; (R)-pantoate from 3-methyl-2-oxobutanoate: step 1/2. Functionally, catalyzes the reversible reaction in which hydroxymethyl group from 5,10-methylenetetrahydrofolate is transferred onto alpha-ketoisovalerate to form ketopantoate. The polypeptide is 3-methyl-2-oxobutanoate hydroxymethyltransferase 2, mitochondrial (KPHMT2) (Oryza sativa subsp. japonica (Rice)).